Consider the following 202-residue polypeptide: Dephospho-CoA kinase (202 aa).

A DPCK domain is found at 6–202 (KISVTGDPSS…QCFKALKGTI (197 aa)). Residue 14 to 19 (SSGKTE) participates in ATP binding.

The protein belongs to the CoaE family.

Its subcellular location is the cytoplasm. The enzyme catalyses 3'-dephospho-CoA + ATP = ADP + CoA + H(+). The protein operates within cofactor biosynthesis; coenzyme A biosynthesis; CoA from (R)-pantothenate: step 5/5. Functionally, catalyzes the phosphorylation of the 3'-hydroxyl group of dephosphocoenzyme A to form coenzyme A. The chain is Dephospho-CoA kinase from Chlamydia muridarum (strain MoPn / Nigg).